Here is a 375-residue protein sequence, read N- to C-terminus: Adiponectin receptor protein 1 (375 aa).

Residues 1–60 (MSSHKGSVVAQGNGAPASNREADTVELAELGPLLEEKGKRVIANPPKAEEEQTCPVPQEE) are disordered. Residues 1–136 (MSSHKGSVVA…SIFRIHTETG (136 aa)) are Cytoplasmic-facing. The helical transmembrane segment at 137–157 (NIWTHLLGFVLFLFLGILTML) threads the bilayer. At 158–170 (RPNMYFMAPLQEK) the chain is on the extracellular side. Residues 171 to 191 (VVFGMFFLGAVLCLSFSWLFH) traverse the membrane as a helical segment. Position 191 (His-191) interacts with Zn(2+). Residues 192–203 (TVYCHSEKVSRT) are Cytoplasmic-facing. The helical transmembrane segment at 204-224 (FSKLDYSGIALLIMGSFVPWL) threads the bilayer. The Extracellular portion of the chain corresponds to 225-234 (YYSFYCSPQP). A helical transmembrane segment spans residues 235-255 (RLIYLSIVCVLGISAIIVAQW). At 256-264 (DRFATPKHR) the chain is on the cytoplasmic side. A helical transmembrane segment spans residues 265 to 285 (QTRAGVFLGLGLSGVVPTMHF). Residues 286 to 298 (TIAEGFVKATTVG) are Extracellular-facing. The chain crosses the membrane as a helical span at residues 299–319 (QMGWFFLMAVMYITGAGLYAA). Residues 320-337 (RIPERFFPGKFDIWFQSH) are Cytoplasmic-facing. The Zn(2+) site is built by His-337 and His-341. Residues 338-358 (QIFHVLVVAAAFVHFYGVSNL) traverse the membrane as a helical segment. Topologically, residues 359-375 (QEFRYGLEGGCTDDTLL) are extracellular.

This sequence belongs to the ADIPOR family. In terms of assembly, may form homooligomers and heterooligomers with ADIPOR2. Interacts with APPL2 (via BAR domain); hinders the accessibility of APPL1 to ADIPOR1; negatively regulates adiponectin signaling; ADIPOQ dissociates this interaction and facilitates the recruitment of APPL1 to ADIPOR1. Interacts with APPL1; ADIPOQ enhances this interaction; inhibites adiponectin-stimulated binding of APPL2 to ADIPOR1. Widely expressed. Highly expressed in heart and skeletal muscle. Expressed at intermediate level in brain, spleen, kidney, liver, placenta, lung and peripheral blood leukocytes. Weakly expressed in colon, thymus and small intestine.

It is found in the cell membrane. Its function is as follows. Receptor for ADIPOQ, an essential hormone secreted by adipocytes that regulates glucose and lipid metabolism. Required for normal glucose and fat homeostasis and for maintaining a normal body weight. ADIPOQ-binding activates a signaling cascade that leads to increased AMPK activity, and ultimately to increased fatty acid oxidation, increased glucose uptake and decreased gluconeogenesis. Has high affinity for globular adiponectin and low affinity for full-length adiponectin. This chain is Adiponectin receptor protein 1, found in Homo sapiens (Human).